A 228-amino-acid polypeptide reads, in one-letter code: Cytochrome c oxidase subunit 2 (228 aa).

At 1–14 (MAYPLQLGFQDATS) the chain is on the mitochondrial intermembrane side. A helical transmembrane segment spans residues 15 to 45 (PVMEELLHFHDHTLMIIFLISSLVLYIIMLM). Topologically, residues 46-59 (LTSKLVHTNMMNVQ) are mitochondrial matrix. Residues 60 to 87 (EMEMIWTILPAIILILIALPSLHTLYMM) traverse the membrane as a helical segment. Residues 88–228 (DEINNPLLTI…FENWSASLAQ (141 aa)) lie on the Mitochondrial intermembrane side of the membrane. The Cu cation site is built by histidine 161, cysteine 196, glutamate 198, cysteine 200, histidine 204, and methionine 207. Position 198 (glutamate 198) interacts with Mg(2+). Tyrosine 218 carries the post-translational modification Phosphotyrosine.

This sequence belongs to the cytochrome c oxidase subunit 2 family. As to quaternary structure, component of the cytochrome c oxidase (complex IV, CIV), a multisubunit enzyme composed of 14 subunits. The complex is composed of a catalytic core of 3 subunits MT-CO1, MT-CO2 and MT-CO3, encoded in the mitochondrial DNA, and 11 supernumerary subunits COX4I, COX5A, COX5B, COX6A, COX6B, COX6C, COX7A, COX7B, COX7C, COX8 and NDUFA4, which are encoded in the nuclear genome. The complex exists as a monomer or a dimer and forms supercomplexes (SCs) in the inner mitochondrial membrane with NADH-ubiquinone oxidoreductase (complex I, CI) and ubiquinol-cytochrome c oxidoreductase (cytochrome b-c1 complex, complex III, CIII), resulting in different assemblies (supercomplex SCI(1)III(2)IV(1) and megacomplex MCI(2)III(2)IV(2)). Found in a complex with TMEM177, COA6, COX18, COX20, SCO1 and SCO2. Interacts with TMEM177 in a COX20-dependent manner. Interacts with COX20. Interacts with COX16. Requires Cu cation as cofactor.

It is found in the mitochondrion inner membrane. It catalyses the reaction 4 Fe(II)-[cytochrome c] + O2 + 8 H(+)(in) = 4 Fe(III)-[cytochrome c] + 2 H2O + 4 H(+)(out). In terms of biological role, component of the cytochrome c oxidase, the last enzyme in the mitochondrial electron transport chain which drives oxidative phosphorylation. The respiratory chain contains 3 multisubunit complexes succinate dehydrogenase (complex II, CII), ubiquinol-cytochrome c oxidoreductase (cytochrome b-c1 complex, complex III, CIII) and cytochrome c oxidase (complex IV, CIV), that cooperate to transfer electrons derived from NADH and succinate to molecular oxygen, creating an electrochemical gradient over the inner membrane that drives transmembrane transport and the ATP synthase. Cytochrome c oxidase is the component of the respiratory chain that catalyzes the reduction of oxygen to water. Electrons originating from reduced cytochrome c in the intermembrane space (IMS) are transferred via the dinuclear copper A center (CU(A)) of subunit 2 and heme A of subunit 1 to the active site in subunit 1, a binuclear center (BNC) formed by heme A3 and copper B (CU(B)). The BNC reduces molecular oxygen to 2 water molecules using 4 electrons from cytochrome c in the IMS and 4 protons from the mitochondrial matrix. This chain is Cytochrome c oxidase subunit 2 (MT-CO2), found in Loxodonta africana (African elephant).